We begin with the raw amino-acid sequence, 463 residues long: Quinolone resistance protein NorB (463 aa).

Helical transmembrane passes span 17 to 37 (IGIV…VNVV), 53 to 73 (IAVS…GGLA), 86 to 106 (IILN…LLLI), 107 to 127 (IGRL…LSII), 142 to 162 (YWSI…GAVA), 165 to 185 (LGWR…LFLI), 201 to 221 (FDIK…ILIT), 230 to 250 (SLLF…FIVL), 273 to 293 (TASN…NTFV), 299 to 319 (YSSL…LIMI), 334 to 354 (PMLI…LTFL), 357 to 377 (ILYV…LGIY), 403 to 423 (MASA…YAIV), and 435 to 455 (IALW…LLLV).

It belongs to the major facilitator superfamily. TCR/Tet family.

It localises to the cell membrane. Functionally, multidrug efflux pump that acts independently of NorA and is one of the factors that confers resistance against diverse quinolones and chemical compounds. Can facilitate bacterial survival in vivo when overexpressed in an abscess and may contribute to the relative resistance of staphylococcal abscesses to antimicrobial therapy. The polypeptide is Quinolone resistance protein NorB (norB) (Staphylococcus aureus (strain MW2)).